The following is a 323-amino-acid chain: MIDFGNFYSLIAKNHLSHWLETLPAQIANWQREQQHGLFKQWSNTVEFLPEIKPYRLDLLHSVTAESEEPLSTGQIKRIETLMRNLMPWRKGPFSLYGVNIDTEWRSDWKWDRVLPHLSDLTGRTILDVGCGSGYHMWRMIGAGAHLAVGIDPTQLFLCQFEAVRKLLGNDQRAHLLPLGIEQLPALKAFDTVFSMGVLYHRRSPLEHLWQLKDQLVNEGELVLETLVIDGDENTVLVPGDRYAQMRNVYFIPSALALKNWLKKCGFVDIRIVDVCVTTTEEQRRTEWMVTESLSDFLDPHDPSKTVEGYPAPKRAVLIARKP.

Carboxy-S-adenosyl-L-methionine is bound by residues lysine 91, tryptophan 105, lysine 110, glycine 130, 152-154, 181-182, methionine 196, tyrosine 200, and arginine 315; these read DPT and IE.

The protein belongs to the class I-like SAM-binding methyltransferase superfamily. CmoB family. As to quaternary structure, homotetramer.

The enzyme catalyses carboxy-S-adenosyl-L-methionine + 5-hydroxyuridine(34) in tRNA = 5-carboxymethoxyuridine(34) in tRNA + S-adenosyl-L-homocysteine + H(+). Its function is as follows. Catalyzes carboxymethyl transfer from carboxy-S-adenosyl-L-methionine (Cx-SAM) to 5-hydroxyuridine (ho5U) to form 5-carboxymethoxyuridine (cmo5U) at position 34 in tRNAs. The chain is tRNA U34 carboxymethyltransferase from Shigella flexneri serotype 5b (strain 8401).